Consider the following 640-residue polypeptide: Threonine--tRNA ligase (640 aa).

The region spanning 1–59 is the TGS domain; it reads MKIKVKLPDGKEKEYDRGITPAEIAKELGIKKAIGAVVNGELWDLKRPIENDCELRLVT. The tract at residues 240 to 531 is catalytic; that stretch reads DHRKLGPQLE…LIEHFAGAFP (292 aa). The Zn(2+) site is built by cysteine 332, histidine 383, and histidine 508.

It belongs to the class-II aminoacyl-tRNA synthetase family. As to quaternary structure, homodimer. The cofactor is Zn(2+).

It is found in the cytoplasm. It catalyses the reaction tRNA(Thr) + L-threonine + ATP = L-threonyl-tRNA(Thr) + AMP + diphosphate + H(+). Catalyzes the attachment of threonine to tRNA(Thr) in a two-step reaction: L-threonine is first activated by ATP to form Thr-AMP and then transferred to the acceptor end of tRNA(Thr). Also edits incorrectly charged L-seryl-tRNA(Thr). In Thermotoga maritima (strain ATCC 43589 / DSM 3109 / JCM 10099 / NBRC 100826 / MSB8), this protein is Threonine--tRNA ligase.